We begin with the raw amino-acid sequence, 120 residues long: uncharacterized protein (120 aa).

The chain crosses the membrane as a helical span at residues 93 to 109 (LCVGISTTMIIQVLFLL).

The protein resides in the membrane. This is an uncharacterized protein from Saccharomyces cerevisiae (strain ATCC 204508 / S288c) (Baker's yeast).